Reading from the N-terminus, the 91-residue chain is Small ribosomal subunit protein uS19 (91 aa).

It belongs to the universal ribosomal protein uS19 family.

Its function is as follows. Protein S19 forms a complex with S13 that binds strongly to the 16S ribosomal RNA. The protein is Small ribosomal subunit protein uS19 of Ralstonia nicotianae (strain ATCC BAA-1114 / GMI1000) (Ralstonia solanacearum).